The primary structure comprises 1043 residues: MNFSVITCPNGGTNQGLLPYLMALDQYQLEEFKLCLEPQQLMDFWSAPQGHFPRIPWANLRAADPLNLSFLLDEHFPKGQAWKVVLGIFQTMNLTSLCEKVRAEMKENVQTQELQDPTQEDLEMLEAAAGNMQTQGCQDPNQEELDELEEETGNVQAQGCQDPNQEEPEMLEEADHRRKYRENMKAELLETWDNISWPKDHVYIRNTSKDEHEELQRLLDPNRTRAQAQTIVLVGRAGVGKTTLAMQAMLHWANGVLFQQRFSYVFYLSCHKIRYMKETTFAELISLDWPDFDAPIEEFMSQPEKLLFIIDGFEEIIISESRSESLDDGSPCTDWYQELPVTKILHSLLKKELVPLATLLITIKTWFVRDLKASLVNPCFVQITGFTGDDLRVYFMRHFDDSSEVEKILQQLRKNETLFHSCSAPMVCWTVCSCLKQPKVRYYDLQSITQTTTSLYAYFFSNLFSTAEVDLADDSWPGQWRALCSLAIEGLWSMNFTFNKEDTEIEGLEVPFIDSLYEFNILQKINDCGGCTTFTHLSFQEFFAAMSFVLEEPREFPPHSTKPQEMKMLLQHVLLDKEAYWTPVVLFFFGLLNKNIARELEDTLHCKISPRVMEELLKWGEELGKAESASLQFHILRLFHCLHESQEEDFTKKMLGRIFEVDLNILEDEELQASSFCLKHCKRLNKLRLSVSSHILERDLEILETSKFDSRMHAWNSICSTLVTNENLHELDLSNSKLHASSVKGLCLALKNPRCKVQKLTCKSVTPEWVLQDLIIALQGNSKLTHLNFSSNKLGMTVPLILKALRHSACNLKYLCLEKCNLSAASCQDLALFLTSIQHVTRLCLGFNRLQDDGIKLLCAALTHPKCALERLELWFCQLAAPACKHLSDALLQNRSLTHLNLSKNSLRDEGVKFLCEALGRPDGNLQSLNLSGCSFTREGCGELANALSHNHNVKILDLGENDLQDDGVKLLCEALKPHRALHTLGLAKCNLTTACCQHLFSVLSSSKSLVNLNLLGNELDTDGVKMLCKALKKSTCRLQKLG.

Residues 1–107 form the Pyrin domain; sequence MNFSVITCPN…CEKVRAEMKE (107 aa). In terms of domain architecture, NACHT spans 229 to 558; the sequence is QTIVLVGRAG…VLEEPREFPP (330 aa). 235–242 is an ATP binding site; it reads GRAGVGKT. 7 LRR repeats span residues 725–749, 781–804, 837–864, 894–917, 923–946, 951–978, and 1007–1030; these read NENL…LCLA, NSKL…ILKA, IQHV…ALTH, NRSL…FLCE, DGNL…ELAN, NHNV…ALKP, and SKSL…MLCK.

This sequence belongs to the NLRP family.

Its function is as follows. Involved in inflammation. This Homo sapiens (Human) protein is NACHT, LRR and PYD domains-containing protein 13 (NLRP13).